Here is a 241-residue protein sequence, read N- to C-terminus: Putative CRISPR-associated endoribonuclease-like protein Cas6 (241 aa).

It belongs to the CRISPR-associated protein Cas6/Cse3/CasE family. In terms of assembly, binds crRNA.

Functionally, CRISPR (clustered regularly interspaced short palindromic repeat), is an adaptive immune system that provides protection against mobile genetic elements (viruses, transposable elements and conjugative plasmids). CRISPR clusters contain sequences complementary to antecedent mobile elements and target invading nucleic acids. CRISPR clusters are transcribed and processed into CRISPR RNA (crRNA), also called psiRNA (prokaryotic silencing) in this organism (Potential). This chain is Putative CRISPR-associated endoribonuclease-like protein Cas6 (cas6b), found in Pyrococcus furiosus (strain ATCC 43587 / DSM 3638 / JCM 8422 / Vc1).